We begin with the raw amino-acid sequence, 410 residues long: Transcription factor rglT (410 aa).

Positions 1–24 (MQFDSLPLPPSSSHDTTSVPPLKR) are disordered. The segment at residues 28–55 (CDECRKRKLKCSGEATGCSRCLKQSLPC) is a DNA-binding region (zn(2)-C6 fungal-type). A disordered region spans residues 353–372 (HRTRTVESPNEPGSCSPVSH). The span at 358 to 369 (VESPNEPGSCSP) shows a compositional bias: polar residues.

The protein resides in the nucleus. Transcription factor that is involved in protection against oxidative stress. Binds to promoter regions of the gliotoxin (GT) biosynthetic genes gliZ, gliF, gliT, gliM, gliA and gtmA. Two related but different DNA motifs (5'-TCGG-3' and 5'-CGGNCGG-3') are specifically enriched among rglT binding sites in GT-inducing conditions. Also indirectly regulates the expression of gliP, gliG, gliH and gliN. Plays a key role in resistance against exogenously-added GT and GT biosynthesis, mainly through the direct regulation of gliT. Furthermore, rglT is important for virulence in chemotherapeutic mice with invasive pulmonary aspergillosis (IPA). The protein is Transcription factor rglT of Aspergillus fumigatus (strain CBS 144.89 / FGSC A1163 / CEA10) (Neosartorya fumigata).